The following is a 102-amino-acid chain: Large ribosomal subunit protein bL21 (102 aa).

Over residues 79–91 the composition is skewed to basic residues; the sequence is RKDSKRKKGHRQP. The segment at 79–102 is disordered; it reads RKDSKRKKGHRQPYTKLTIDKINA.

This sequence belongs to the bacterial ribosomal protein bL21 family. In terms of assembly, part of the 50S ribosomal subunit. Contacts protein L20.

Functionally, this protein binds to 23S rRNA in the presence of protein L20. The sequence is that of Large ribosomal subunit protein bL21 from Staphylococcus carnosus (strain TM300).